Reading from the N-terminus, the 581-residue chain is MKSHIQSLLEQTIESFKQQGILPADFEARIQVDRTKDKSHGDLATNVAMMLTKAAGKNPRELAQLIIDNLPASAYVAKVEIAGPGFINFFIDDSALANQLQAAIGDEHLGIKLPAPQTVVVDYSSPNLAKEMHVGHLRSTIIGDSVVRTLEFLGHKVIRQNHVGDWGTQFGMLLAYMEELRAANGEQAQLELSDLETFYRAAKLRFDESAEFATRARQLVVALQSGDEYCNKLWREFNDISLSHCHEVYERLGVSLTRADVHGESAYNADLEQVVNDLAAKGLLTESNGAKVVFQEEFRTKEGEPLPVIIQKADGGYLYATTDLAAMRYRSNVLKADRVLYFVDLRQALHFQQVFSLAKLAKFVREDMSLEHLGFGTMNGEDGRPFKTRTGGVVKLVDLLDEANTRALELVRSKNPDMDEATLAEIARVVGISAVKYADLSKNRTSDYIFSFEQMLSFEGNTAPYLLYAYTRVAGIFKRATDVDLSQAKIVLEHEKEKDLGNKLAQFGEILSRVVDKGQPHVLCGYLYELAGAFSSFYEACPVLAADNDEQKHSRLLLSQLTASTLQKGLNLLGIETLERM.

The short motif at 126 to 136 is the 'HIGH' region element; sequence PNLAKEMHVGH.

The protein belongs to the class-I aminoacyl-tRNA synthetase family. In terms of assembly, monomer.

It is found in the cytoplasm. It catalyses the reaction tRNA(Arg) + L-arginine + ATP = L-arginyl-tRNA(Arg) + AMP + diphosphate. This is Arginine--tRNA ligase from Shewanella oneidensis (strain ATCC 700550 / JCM 31522 / CIP 106686 / LMG 19005 / NCIMB 14063 / MR-1).